A 615-amino-acid chain; its full sequence is Forkhead box protein O (615 aa).

5 disordered regions span residues 39 to 77, 182 to 205, 217 to 269, 318 to 359, and 389 to 409; these read RARS…DSQQ, KSVR…RAKK, GLND…RLSP, FSAA…APGY, and NSVT…SDSL. T44 bears the Phosphothreonine; by PKB/AKT1 mark. Positions 63 to 77 are enriched in polar residues; it reads TKASNQQLAPGDSQQ. S75 bears the Phosphoserine mark. Positions 95–201 form a DNA-binding region, fork-head; it reads WGNLSYADLI…ETSRYEKRRG (107 aa). At S190 the chain carries Phosphoserine; by PKB/AKT1. Polar residues-rich tracts occupy residues 221–230 and 256–265; these read ATPSPSSSVS and RASSNASSCG. S259 is subject to Phosphoserine; by PKB/AKT1. A phosphoserine mark is found at S262, S263, and S268. Over residues 326–335 the composition is skewed to pro residues; sequence SQPPPPPYQP. Residues 336–351 show a composition bias toward low complexity; the sequence is PQHQQAQQQQQQSPYA.

In terms of assembly, interacts with melt.

The protein resides in the cytoplasm. It localises to the nucleus. Functionally, transcription factor involved in the regulation of the insulin signaling pathway. Consistently activates both the downstream target Thor\d4EBP and the feedback control target InR. Involved in negative regulation of the cell cycle, modulating cell growth and proliferation. In response to cellular stresses, such as nutrient deprivation or increased levels of reactive oxygen species, foxo is activated and inhibits growth through the action of target genes such as Thor. Foxo activated in the adult fat body can regulate lifespan in adults; an insulin peptide itself may function as one secondary messenger of insulin-regulated aging. Also regulates Lip4, homolog of human acid lipases, thereby acting as a key modulator of lipid metabolism by insulin signaling and integrates insulin responses to glucose and lipid homeostasis. This is Forkhead box protein O from Drosophila erecta (Fruit fly).